The sequence spans 313 residues: HPr kinase/phosphorylase (313 aa).

Active-site residues include H140 and K161. 155–162 (GNSGAGKS) is a binding site for ATP. S162 serves as a coordination point for Mg(2+). The Proton acceptor; for phosphorylation activity. Proton donor; for dephosphorylation activity role is filled by D179. The important for the catalytic mechanism of both phosphorylation and dephosphorylation stretch occupies residues 203–212 (IEVRGLGILN). E204 contacts Mg(2+). R246 is a catalytic residue. Positions 267-272 (PVAAGR) are important for the catalytic mechanism of dephosphorylation.

The protein belongs to the HPrK/P family. As to quaternary structure, homohexamer. Mg(2+) is required as a cofactor.

The enzyme catalyses [HPr protein]-L-serine + ATP = [HPr protein]-O-phospho-L-serine + ADP + H(+). It carries out the reaction [HPr protein]-O-phospho-L-serine + phosphate + H(+) = [HPr protein]-L-serine + diphosphate. In terms of biological role, catalyzes the ATP- as well as the pyrophosphate-dependent phosphorylation of a specific serine residue in HPr, a phosphocarrier protein of the phosphoenolpyruvate-dependent sugar phosphotransferase system (PTS). HprK/P also catalyzes the pyrophosphate-producing, inorganic phosphate-dependent dephosphorylation (phosphorolysis) of seryl-phosphorylated HPr (P-Ser-HPr). The polypeptide is HPr kinase/phosphorylase (Aromatoleum aromaticum (strain DSM 19018 / LMG 30748 / EbN1) (Azoarcus sp. (strain EbN1))).